A 333-amino-acid polypeptide reads, in one-letter code: 4-hydroxy-2-oxovalerate aldolase (333 aa).

Residues 3-253 (ILINDSTLRD…NTGIDLYHFL (251 aa)) enclose the Pyruvate carboxyltransferase domain. A substrate-binding site is contributed by 11-12 (RD). D12 lines the Mn(2+) pocket. H15 (proton acceptor) is an active-site residue. Residues S165 and H192 each coordinate substrate. 2 residues coordinate Mn(2+): H192 and H194.

This sequence belongs to the 4-hydroxy-2-oxovalerate aldolase family. As to quaternary structure, interacts with MhpF.

The catalysed reaction is (S)-4-hydroxy-2-oxopentanoate = acetaldehyde + pyruvate. The protein operates within aromatic compound metabolism; 3-phenylpropanoate degradation. In terms of biological role, catalyzes the retro-aldol cleavage of 4-hydroxy-2-oxopentanoate to pyruvate and acetaldehyde. Is involved in the meta-cleavage pathway for the degradation of aromatic compounds. The chain is 4-hydroxy-2-oxovalerate aldolase from Serratia proteamaculans (strain 568).